We begin with the raw amino-acid sequence, 142 residues long: Large ribosomal subunit protein uL11 (142 aa).

The protein belongs to the universal ribosomal protein uL11 family. Part of the ribosomal stalk of the 50S ribosomal subunit. Interacts with L10 and the large rRNA to form the base of the stalk. L10 forms an elongated spine to which L12 dimers bind in a sequential fashion forming a multimeric L10(L12)X complex. Post-translationally, one or more lysine residues are methylated.

Forms part of the ribosomal stalk which helps the ribosome interact with GTP-bound translation factors. The polypeptide is Large ribosomal subunit protein uL11 (Mesorhizobium japonicum (strain LMG 29417 / CECT 9101 / MAFF 303099) (Mesorhizobium loti (strain MAFF 303099))).